Consider the following 196-residue polypeptide: Probable malonic semialdehyde reductase RutE (196 aa).

The protein belongs to the nitroreductase family. HadB/RutE subfamily. FMN serves as cofactor.

The enzyme catalyses 3-hydroxypropanoate + NADP(+) = 3-oxopropanoate + NADPH + H(+). Its function is as follows. May reduce toxic product malonic semialdehyde to 3-hydroxypropionic acid, which is excreted. The polypeptide is Probable malonic semialdehyde reductase RutE (Klebsiella pneumoniae subsp. pneumoniae (strain ATCC 700721 / MGH 78578)).